Here is a 357-residue protein sequence, read N- to C-terminus: Metacaspase-3 (357 aa).

His168 is a catalytic residue. Ca(2+)-binding residues include Asp183, Asp199, and Asp200. Residue Cys223 is part of the active site. Asp230 is a binding site for Ca(2+).

Belongs to the peptidase C14B family.

The protein resides in the recycling endosome. With respect to regulation, activated by Ca(2+). Functionally, cysteine protease that cleaves specifically after arginine or lysine residues. In the bloodstream form, may cleave inactive metacaspase-4 MCA4 prior to MCA4 secretion. This is Metacaspase-3 from Trypanosoma brucei brucei.